The primary structure comprises 231 residues: Cytochrome c oxidase subunit 2 (231 aa).

The Mitochondrial intermembrane segment spans residues 1-14 (MAHPVHVGLKEATS). A helical transmembrane segment spans residues 15–45 (PFMEELIAFHDHTLMIIFLISSLVLYIISMM). Residues 46 to 59 (LTTKLTHTSTMNAQ) lie on the Mitochondrial matrix side of the membrane. A helical transmembrane segment spans residues 60–87 (EIEIIWTILPAIILIMIALPSLRILYMT). Over 88–231 (DEFNKPYLTL…WASYLYIVSL (144 aa)) the chain is Mitochondrial intermembrane. Cu cation-binding residues include H161, C196, E198, C200, H204, and M207. E198 contacts Mg(2+).

The protein belongs to the cytochrome c oxidase subunit 2 family. In terms of assembly, component of the cytochrome c oxidase (complex IV, CIV), a multisubunit enzyme composed of 14 subunits. The complex is composed of a catalytic core of 3 subunits MT-CO1, MT-CO2 and MT-CO3, encoded in the mitochondrial DNA, and 11 supernumerary subunits COX4I, COX5A, COX5B, COX6A, COX6B, COX6C, COX7A, COX7B, COX7C, COX8 and NDUFA4, which are encoded in the nuclear genome. The complex exists as a monomer or a dimer and forms supercomplexes (SCs) in the inner mitochondrial membrane with NADH-ubiquinone oxidoreductase (complex I, CI) and ubiquinol-cytochrome c oxidoreductase (cytochrome b-c1 complex, complex III, CIII), resulting in different assemblies (supercomplex SCI(1)III(2)IV(1) and megacomplex MCI(2)III(2)IV(2)). Found in a complex with TMEM177, COA6, COX18, COX20, SCO1 and SCO2. Interacts with TMEM177 in a COX20-dependent manner. Interacts with COX20. Interacts with COX16. Requires Cu cation as cofactor.

The protein localises to the mitochondrion inner membrane. The catalysed reaction is 4 Fe(II)-[cytochrome c] + O2 + 8 H(+)(in) = 4 Fe(III)-[cytochrome c] + 2 H2O + 4 H(+)(out). Its function is as follows. Component of the cytochrome c oxidase, the last enzyme in the mitochondrial electron transport chain which drives oxidative phosphorylation. The respiratory chain contains 3 multisubunit complexes succinate dehydrogenase (complex II, CII), ubiquinol-cytochrome c oxidoreductase (cytochrome b-c1 complex, complex III, CIII) and cytochrome c oxidase (complex IV, CIV), that cooperate to transfer electrons derived from NADH and succinate to molecular oxygen, creating an electrochemical gradient over the inner membrane that drives transmembrane transport and the ATP synthase. Cytochrome c oxidase is the component of the respiratory chain that catalyzes the reduction of oxygen to water. Electrons originating from reduced cytochrome c in the intermembrane space (IMS) are transferred via the dinuclear copper A center (CU(A)) of subunit 2 and heme A of subunit 1 to the active site in subunit 1, a binuclear center (BNC) formed by heme A3 and copper B (CU(B)). The BNC reduces molecular oxygen to 2 water molecules using 4 electrons from cytochrome c in the IMS and 4 protons from the mitochondrial matrix. The polypeptide is Cytochrome c oxidase subunit 2 (MT-CO2) (Brachyteles hypoxanthus (Northern muriqui)).